The sequence spans 123 residues: Putative EG45-like domain containing protein 1 (123 aa).

A signal peptide spans 1–21 (MSKSIVFFSTVLVFLFSFSYA). The region spanning 24-123 (GIATFYTSYT…AGIINIDYFP (100 aa)) is the Expansin-like EG45 domain.

It localises to the secreted. Its function is as follows. Might have a systemic role in water and solute homeostasis. The polypeptide is Putative EG45-like domain containing protein 1 (EGC1) (Arabidopsis thaliana (Mouse-ear cress)).